We begin with the raw amino-acid sequence, 827 residues long: Multiple RNA-binding domain-containing protein 1 (827 aa).

One can recognise an RRM 1 domain in the interval 5–78 (SRIFVKNLPP…SRISVDIAKP (74 aa)). Disordered regions lie at residues 77–116 (KPIA…TAAA), 176–230 (AGLE…ATDD), and 256–299 (AASG…DPES). Over residues 179–189 (EDGESDDEYED) the composition is skewed to acidic residues. 2 stretches are compositionally biased toward low complexity: residues 208–225 (APLA…PVSL) and 256–270 (AASG…STSV). A compositionally biased stretch (basic and acidic residues) spans 277–288 (KPEEHPAEDSRE). 4 consecutive RRM domains span residues 308-384 (SRLF…PAAA), 489-560 (TTIL…KGPK), 599-682 (SSLF…ASHR), and 704-781 (TKLV…FAQA).

It belongs to the RRM MRD1 family.

It is found in the nucleus. Its function is as follows. Involved in pre-rRNA processing. The sequence is that of Multiple RNA-binding domain-containing protein 1 (mrd-1) from Neurospora crassa (strain ATCC 24698 / 74-OR23-1A / CBS 708.71 / DSM 1257 / FGSC 987).